A 230-amino-acid polypeptide reads, in one-letter code: Sugar fermentation stimulation protein homolog (230 aa).

Belongs to the SfsA family.

The chain is Sugar fermentation stimulation protein homolog from Clostridium botulinum (strain 657 / Type Ba4).